Consider the following 287-residue polypeptide: Pyridoxal 5'-phosphate synthase subunit PdxS (287 aa).

Residue aspartate 21 participates in D-ribose 5-phosphate binding. The active-site Schiff-base intermediate with D-ribose 5-phosphate is lysine 78. A D-ribose 5-phosphate-binding site is contributed by glycine 150. Arginine 162 lines the D-glyceraldehyde 3-phosphate pocket. Residues glycine 211 and 232–233 (GS) each bind D-ribose 5-phosphate.

The protein belongs to the PdxS/SNZ family. In the presence of PdxT, forms a dodecamer of heterodimers.

It carries out the reaction aldehydo-D-ribose 5-phosphate + D-glyceraldehyde 3-phosphate + L-glutamine = pyridoxal 5'-phosphate + L-glutamate + phosphate + 3 H2O + H(+). Its pathway is cofactor biosynthesis; pyridoxal 5'-phosphate biosynthesis. In terms of biological role, catalyzes the formation of pyridoxal 5'-phosphate from ribose 5-phosphate (RBP), glyceraldehyde 3-phosphate (G3P) and ammonia. The ammonia is provided by the PdxT subunit. Can also use ribulose 5-phosphate and dihydroxyacetone phosphate as substrates, resulting from enzyme-catalyzed isomerization of RBP and G3P, respectively. This is Pyridoxal 5'-phosphate synthase subunit PdxS from Tropheryma whipplei (strain Twist) (Whipple's bacillus).